The following is a 156-amino-acid chain: Small ribosomal subunit protein uS7 (156 aa).

This sequence belongs to the universal ribosomal protein uS7 family. Part of the 30S ribosomal subunit. Contacts proteins S9 and S11.

In terms of biological role, one of the primary rRNA binding proteins, it binds directly to 16S rRNA where it nucleates assembly of the head domain of the 30S subunit. Is located at the subunit interface close to the decoding center, probably blocks exit of the E-site tRNA. In Aster yellows witches'-broom phytoplasma (strain AYWB), this protein is Small ribosomal subunit protein uS7.